Reading from the N-terminus, the 365-residue chain is Phosphatidylcholine:ceramide cholinephosphotransferase 2 (365 aa).

The span at 1 to 14 (MDIIETAKLEEHLE) shows a compositional bias: basic and acidic residues. Residues 1 to 52 (MDIIETAKLEEHLENQPSDPTNTYARPAEPVEEENKNGNGKPKSLSSGLRKG) are disordered. Over residues 15 to 24 (NQPSDPTNTY) the composition is skewed to polar residues. 4 helical membrane-spanning segments follow: residues 80 to 100 (GIAF…ITVV), 128 to 148 (FSVS…QWLF), 159 to 179 (FCFI…VTTL), and 206 to 226 (LISG…DFLF). His-229 is a catalytic residue. The chain crosses the membrane as a helical span at residues 248-268 (FWWYHLICWLLSAAGIICILV). Catalysis depends on residues His-272 and Asp-276. Residues 275-295 (IDVIIAYYITTRLFWWYHSMA) form a helical membrane-spanning segment. Residues 296–365 (NEKNLKVSSQ…KIGEDNEKST (70 aa)) lie on the Cytoplasmic side of the membrane. 4 S-palmitoyl cysteine lipidation sites follow: Cys-331, Cys-332, Cys-343, and Cys-348.

The protein belongs to the sphingomyelin synthase family. In terms of processing, palmitoylated on Cys-331, Cys-332, Cys-343 and Cys-348; which plays an important role in plasma membrane localization. Brain, heart, kidney, liver, muscle and stomach. Also expressed in a number of cell lines such as carcinoma HeLa cells, hepatoma Hep-G2 cells, and colon carcinoma Caco-2 cells.

It is found in the cell membrane. The protein resides in the golgi apparatus membrane. The enzyme catalyses an N-acylsphing-4-enine + a 1,2-diacyl-sn-glycero-3-phosphocholine = a sphingomyelin + a 1,2-diacyl-sn-glycerol. The catalysed reaction is an N-acylsphinganine + a 1,2-diacyl-sn-glycero-3-phosphocholine = an N-acylsphinganine-1-phosphocholine + a 1,2-diacyl-sn-glycerol. It carries out the reaction an N-acyl-(4R)-4-hydroxysphinganine + a 1,2-diacyl-sn-glycero-3-phosphocholine = an N-acyl-(4R)-4-hydroxysphinganine-phosphocholine + a 1,2-diacyl-sn-glycerol. It catalyses the reaction an N-acylsphinganine + a 1,2-diacyl-sn-glycero-3-phosphoethanolamine = an N-acylsphinganine-1-phosphoethanolamine + a 1,2-diacyl-sn-glycerol. The enzyme catalyses an N-acyl-(4R)-4-hydroxysphinganine + a 1,2-diacyl-sn-glycero-3-phosphoethanolamine = an N-acyl-(4R)-4-hydroxysphinganine-1-phosphoethanolamine + a 1,2-diacyl-sn-glycerol. The catalysed reaction is an N-acylsphing-4-enine + a 1,2-diacyl-sn-glycero-3-phosphoethanolamine = an N-acylsphing-4-enine 1-phosphoethanolamine + a 1,2-diacyl-sn-glycerol. It carries out the reaction 1,2-dihexadecanoyl-sn-glycero-3-phosphocholine + an N-acylsphing-4-enine = 1,2-dihexadecanoyl-sn-glycerol + a sphingomyelin. It catalyses the reaction 1-(9Z-octadecenoyl)-2-acyl-sn-3-glycerol + a sphingomyelin = a 1-(9Z-octadecenoyl)-2-acyl-sn-glycero-3-phosphocholine + an N-acylsphing-4-enine. The enzyme catalyses N-hexadecanoylsphinganine + a 1,2-diacyl-sn-glycero-3-phosphocholine = N-hexadecanoyl-sphinganine-1-phosphocholine + a 1,2-diacyl-sn-glycerol. The catalysed reaction is N-hexadecanoyl-(4R)-hydroxysphinganine + a 1,2-diacyl-sn-glycero-3-phosphocholine = N-hexadecanoyl-(4R)-hydroxysphinganine-phosphocholine + a 1,2-diacyl-sn-glycerol. It carries out the reaction N-hexadecanoylsphinganine + a 1,2-diacyl-sn-glycero-3-phosphoethanolamine = N-hexadecanoyl-sphinganine-1-phosphoethanolamine + a 1,2-diacyl-sn-glycerol. It catalyses the reaction N-hexadecanoyl-(4R)-hydroxysphinganine + a 1,2-diacyl-sn-glycero-3-phosphoethanolamine = N-hexadecanoyl-(4R)-hydroxysphinganine-1-phosphoethanolamine + a 1,2-diacyl-sn-glycerol. It functions in the pathway sphingolipid metabolism. Inhibited by bacterial PC-phospholipase C inhibitor D609. Its function is as follows. Sphingomyelin synthase that primarily contributes to sphingomyelin synthesis and homeostasis at the plasma membrane. Catalyzes the reversible transfer of phosphocholine moiety in sphingomyelin biosynthesis: in the forward reaction transfers phosphocholine head group of phosphatidylcholine (PC) on to ceramide (CER) to form ceramide phosphocholine (sphingomyelin, SM) and diacylglycerol (DAG) as by-product, and in the reverse reaction transfers phosphocholine from SM to DAG to form PC and CER. The direction of the reaction appears to depend on the levels of CER and DAG in the plasma membrane. Does not use free phosphorylcholine or CDP-choline as donors. Can also transfer phosphoethanolamine head group of phosphatidylethanolamine (PE) on to ceramide (CER) to form ceramide phosphoethanolamine (CPE). Regulates receptor-mediated signal transduction via mitogenic DAG and proapoptotic CER, as well as via SM, a structural component of membrane rafts that serve as platforms for signal transduction and protein sorting. To a lesser extent, plays a role in secretory transport via regulation of DAG pool at the Golgi apparatus and its downstream effects on PRKD1. Required for normal bone matrix mineralization. This is Phosphatidylcholine:ceramide cholinephosphotransferase 2 from Homo sapiens (Human).